Consider the following 343-residue polypeptide: Glucokinase (343 aa).

Position 21–26 (21–26 (ADVGGT)) interacts with ATP.

It belongs to the bacterial glucokinase family.

It is found in the cytoplasm. The enzyme catalyses D-glucose + ATP = D-glucose 6-phosphate + ADP + H(+). In Cupriavidus pinatubonensis (strain JMP 134 / LMG 1197) (Cupriavidus necator (strain JMP 134)), this protein is Glucokinase.